Reading from the N-terminus, the 167-residue chain is MAFASASNGAVRFTEEQEALVLKSWAIMKDDSANIGHRFFLKIFEVAPSARHLFSFLRNSDVPLEKNPNLKKHAMAVFVMTCEAAAQLRKTGRVTVRDTTIKRLGSTHFKNGVSDTHFEVARFALLETIKDGIPASMWSPEMKNAWGEAYEHLVAAIKEGMKPVALL.

The region spanning 12–162 (RFTEEQEALV…LVAAIKEGMK (151 aa)) is the Globin domain. Residues 45–49 (EVAPS) carry the Homodimerization motif. Residues Ser55, His73, Arg103, Thr107, and His108 each contribute to the heme b site. The Homodimerization signature appears at 115–127 (DTHFEVARFALLE).

It belongs to the plant globin family. Homodimer. It depends on heme b as a cofactor.

The protein resides in the cytoplasm. It is found in the nucleus. The catalysed reaction is Fe(III)-heme b-[protein] + nitric oxide + H2O = Fe(II)-heme b-[protein] + nitrite + 2 H(+). Phytoglobin that reduces nitrite to nitric oxide under anoxic conditions (e.g. during flooding or in waterlogged soil). May not function as an oxygen storage or transport protein. Has an unusually high affinity for O(2) through an hexacoordinate heme iron because of a very low dissociation constant. The protein is Anaerobic nitrite reductase NSHB4 of Oryza sativa subsp. indica (Rice).